The following is an 864-amino-acid chain: MYMARCGPKNNVLCFPFQLSFLFSKRLINKRFKYTLQTEDEKDMMGSLSKNKIITPEDVEFKLAQLREFSNTLKERIHNTKSVNSDGHQSNSIAPISEDSRNVNVTKISSVPNEEKSKNLSDLIHSSFLEKMDHLVPKVIRERVADDDILAKNLFDRSHSNWAPVIDRLYVSEKRFMDIDSREFSVWLNGTVKYLPFHSILHLDEMLLEQINGDVVKFNTHMYECIFNNLGNLKPTNFNQDGTNDKVILKMKELLERYDKALKITEERINKKEGFPSKVPKMTQAILNNCLKYSTKCSSFHDMDYFITKFRDDYGITPNKQNLTTVIQFYSRKEMTKQAWNTFDTMKFLSTKHFPDICTYNTMLRICEKERNFPKALDLFQEIQDHNIKPTTNTYIMMARVLASSSSNAVVSEGKSDSLRLLGWKYLHELEDKNLYRHKKDDLNLFLAMMVLAAFDGDIELSRALYYLFIAKKYKTLCANWKGNILVDQDTIWKSTLMPEMLNYLMLAYARFDPRNLPVLSGYEKGIELRRKFLREFDSSMRLDDTDKLVKFKLPFLPISDLNSEAQVLAESNAIWSFNLENGGTRNTLTSSNEAALEDIKKYRQLLDSFAQEAEDFNEFKFKVMYEVTKMQRESINVNVFNKISLHTYLSIPINLKQQKEFLRRLTFFTFQQHEFEAVIKRLYEGYRNIPSSHTRDQNSISTEAISVSKPETTEDLNLIMHDIWYITCLRHKIMMDTTLYELVMKAAIEFQNEDLAKKVWNDRGKFRTTVPFLKMDQRIRIAKDQKFAHLMVEFFTKQGKYSDAIAIILSSKNRFNWTYSMVRNLHKALEEIEDRNSVEILLDVVNKKSHAKALKWEEQELNM.

The N-terminal 76 residues, 1 to 76, are a transit peptide targeting the mitochondrion; sequence MYMARCGPKN…REFSNTLKER (76 aa). 2 PPR repeats span residues 319 to 353 and 356 to 390; these read NKQNLTTVIQFYSRKEMTKQAWNTFDTMKFLSTKH and DICTYNTMLRICEKERNFPKALDLFQEIQDHNIKP.

It belongs to the CCM1 family. Binds to mitochondrial small subunit 15S rRNA.

Its subcellular location is the mitochondrion. Its function is as follows. Regulates mitochondrial small subunit maturation by controlling 15S rRNA 5'-end processing. Localizes to the 5' precursor of the 15S rRNA in a position that is subsequently occupied by mS47 in the mature yeast mtSSU. Uses structure and sequence-specific RNA recognition, binding to a single-stranded region of the precursor and specifically recognizing bases -6 to -1. The exchange of Ccm1 for mS47 is coupled to the irreversible removal of precursor rRNA that is accompanied by conformational changes of the mitoribosomal proteins uS5m and mS26. These conformational changes signal completion of 5'-end rRNA processing through protection of the mature 5'-end of the 15S rRNA and stabilization of mS47. The removal of the 5' precursor together with the dissociation of Ccm1 may be catalyzed by the 5'-3' exoribonuclease Pet127. Involved in the specific removal of group I introns in mitochondrial encoded transcripts. This is Mitochondrial 15S rRNA processing factor CCM1 (CCM1) from Saccharomyces cerevisiae (strain YJM789) (Baker's yeast).